The following is a 118-amino-acid chain: Probable dihydroneopterin aldolase (118 aa).

Residues Glu-21, Tyr-53, and 72 to 73 (IE) each bind substrate. The active-site Proton donor/acceptor is Lys-98.

This sequence belongs to the DHNA family.

It catalyses the reaction 7,8-dihydroneopterin = 6-hydroxymethyl-7,8-dihydropterin + glycolaldehyde. It participates in cofactor biosynthesis; tetrahydrofolate biosynthesis; 2-amino-4-hydroxy-6-hydroxymethyl-7,8-dihydropteridine diphosphate from 7,8-dihydroneopterin triphosphate: step 3/4. In terms of biological role, catalyzes the conversion of 7,8-dihydroneopterin to 6-hydroxymethyl-7,8-dihydropterin. This is Probable dihydroneopterin aldolase (folB) from Synechocystis sp. (strain ATCC 27184 / PCC 6803 / Kazusa).